We begin with the raw amino-acid sequence, 311 residues long: Dehydrogenase/reductase SDR family member 7C (311 aa).

A signal peptide spans 1–18; the sequence is MGLMAVLMLPLLLLGISG. S47, L49, Y191, K195, and S226 together coordinate NAD(+). Y191 acts as the Proton acceptor in catalysis.

This sequence belongs to the short-chain dehydrogenases/reductases (SDR) family. In terms of tissue distribution, expressed in skeletal muscle and cardiac muscle. Also expressed in liver, kidney, adipocytes and skin.

Its subcellular location is the sarcoplasmic reticulum membrane. The enzyme catalyses all-trans-retinol + NAD(+) = all-trans-retinal + NADH + H(+). In terms of biological role, NADH-dependent oxidoreductase which catalyzes the oxidation of all-trans-retinol to all-trans-retinal. Plays a role in the regulation of cardiac and skeletal muscle metabolic functions. Maintains Ca(2+) intracellular homeostasis by repressing Ca(2+) release from the sarcoplasmic reticulum (SR) in myotubes, possibly through local alternations in NAD/NADH or retinol/retinal. Also plays a role in Ca(2+) homeostasis by controlling Ca(2+) overload in the cytosol and the SR in myotubes. Involved in glucose uptake into skeletal muscles and muscle performance by activating PI3K and mTORC2-mediated AKT1 phosphorylation signaling pathways, possibly through the action of its downstream catalytic product all-trans-retinoic acid. The polypeptide is Dehydrogenase/reductase SDR family member 7C (Mus musculus (Mouse)).